Consider the following 74-residue polypeptide: Putative defensin-like protein 12 (74 aa).

Residues 1–26 form the signal peptide; sequence MAKPCAAFLVFLCLSMLILSIPDISC. 3 disulfide bridges follow: C26–C50, C33–C59, and C39–C61.

This sequence belongs to the DEFL family.

The protein resides in the secreted. This chain is Putative defensin-like protein 12, found in Arabidopsis thaliana (Mouse-ear cress).